Here is a 242-residue protein sequence, read N- to C-terminus: Probable transcriptional regulatory protein Bamb_2332 (242 aa).

This sequence belongs to the TACO1 family.

It localises to the cytoplasm. The polypeptide is Probable transcriptional regulatory protein Bamb_2332 (Burkholderia ambifaria (strain ATCC BAA-244 / DSM 16087 / CCUG 44356 / LMG 19182 / AMMD) (Burkholderia cepacia (strain AMMD))).